Consider the following 429-residue polypeptide: Cell wall protein ECM33 (429 aa).

Positions 1 to 19 are cleaved as a signal peptide; that stretch reads MQFKNALTATAILSASALA. 12 N-linked (GlcNAc...) asparagine glycosylation sites follow: asparagine 21, asparagine 56, asparagine 82, asparagine 196, asparagine 209, asparagine 227, asparagine 234, asparagine 241, asparagine 267, asparagine 279, asparagine 304, and asparagine 328. Phosphoserine is present on serine 339. The span at 361–401 shows a compositional bias: low complexity; that stretch reads LSSTSTESSKSSATSSASSSGDASNAQASVSASASSSSSSS. The segment at 361–410 is disordered; sequence LSSTSTESSKSSATSSASSSGDASNAQASVSASASSSSSSSKKSKGAAPE. A lipid anchor (GPI-anchor amidated glycine) is attached at glycine 406. Residues 407–429 constitute a propeptide, removed in mature form; that stretch reads AAPELVPATSFMGVVAAVAVALL.

The protein belongs to the SPS2 family. In terms of processing, the GPI-anchor is attached to the protein in the endoplasmic reticulum and serves to target the protein to the cell surface. There, the glucosamine-inositol phospholipid moiety is cleaved off and the GPI-modified mannoprotein is covalently attached via its lipidless GPI glycan remnant to the 1,6-beta-glucan of the outer cell wall layer.

The protein localises to the cell membrane. Its subcellular location is the secreted. The protein resides in the cell wall. Its function is as follows. Required for proper cell wall integrity and for the correct assembly of the mannoprotein outer layer of the cell wall. Important for apical bud growth. This is Cell wall protein ECM33 (ECM33) from Saccharomyces cerevisiae (strain YJM789) (Baker's yeast).